Here is a 375-residue protein sequence, read N- to C-terminus: MKVDGIHRRTIWVDADGWSVGIIDQTALPFEFRTRRLTSLEEAAEAITTMAVRGAPLIGVTAAYGMALAMRADATDRAVEAAHDRLLATRPTAVNLRWGLARLREVLSVTPPADRVRRAYAEAAAIAEEDVEVCRAIGRHGMELIRGLHKRNPHRPVNLLTHCNAGWLATVDWGTATAPIYMAHDAGIPVHVWVDETRPRSQGAFLTAWELGHHGVPHTVVADNTGGHLMQHGLVDLAVVGTDRVTARGDVANKIGTYLKALAAHDTGVPFWVALPGSTIDWLLEDGVHGIPIETRGDEEVTEITGRTADGRIERVRIVADGSPVANYGFDVTPARLVTGFITERGLCAASQEGLAGLFPDQAERSARQRVANDA.

Substrate is bound by residues 53-55 (RGA), R90, and Q202. The active-site Proton donor is the D243. 253-254 (NK) is a substrate binding site.

Belongs to the eIF-2B alpha/beta/delta subunits family. MtnA subfamily.

It catalyses the reaction 5-(methylsulfanyl)-alpha-D-ribose 1-phosphate = 5-(methylsulfanyl)-D-ribulose 1-phosphate. It functions in the pathway amino-acid biosynthesis; L-methionine biosynthesis via salvage pathway; L-methionine from S-methyl-5-thio-alpha-D-ribose 1-phosphate: step 1/6. In terms of biological role, catalyzes the interconversion of methylthioribose-1-phosphate (MTR-1-P) into methylthioribulose-1-phosphate (MTRu-1-P). In Rhodospirillum centenum (strain ATCC 51521 / SW), this protein is Methylthioribose-1-phosphate isomerase.